The following is a 570-amino-acid chain: Urease subunit alpha (570 aa).

One can recognise a Urease domain in the interval 131–570 (GGMDSHIHFI…LPMAQRYFLF (440 aa)). Ni(2+) contacts are provided by His136, His138, and Lys219. N6-carboxylysine is present on Lys219. His221 provides a ligand contact to substrate. Ni(2+) is bound by residues His248 and His274. The active-site Proton donor is His322. Asp362 is a Ni(2+) binding site.

This sequence belongs to the metallo-dependent hydrolases superfamily. Urease alpha subunit family. In terms of assembly, heterotrimer of UreA (gamma), UreB (beta) and UreC (alpha) subunits. Three heterotrimers associate to form the active enzyme. The cofactor is Ni cation. Carboxylation allows a single lysine to coordinate two nickel ions.

It is found in the cytoplasm. It catalyses the reaction urea + 2 H2O + H(+) = hydrogencarbonate + 2 NH4(+). It functions in the pathway nitrogen metabolism; urea degradation; CO(2) and NH(3) from urea (urease route): step 1/1. The chain is Urease subunit alpha from Rhizobium meliloti (strain 1021) (Ensifer meliloti).